A 72-amino-acid polypeptide reads, in one-letter code: Peptide Ctri9194 (72 aa).

The N-terminal stretch at Met1–Thr23 is a signal peptide. Ile38 carries the post-translational modification Isoleucine amide. A propeptide spanning residues Ser42 to Tyr72 is cleaved from the precursor.

This sequence belongs to the non-disulfide-bridged peptide (NDBP) superfamily. Short antimicrobial peptide (group 4) family. As to expression, expressed by the venom gland.

The protein localises to the secreted. Antimicrobial peptide. This chain is Peptide Ctri9194, found in Chaerilus tricostatus (Scorpion).